Consider the following 237-residue polypeptide: Probable transcriptional regulatory protein Bpro_2928 (237 aa).

This sequence belongs to the TACO1 family.

Its subcellular location is the cytoplasm. This Polaromonas sp. (strain JS666 / ATCC BAA-500) protein is Probable transcriptional regulatory protein Bpro_2928.